Here is a 205-residue protein sequence, read N- to C-terminus: NAD(P)H dehydrogenase (quinone) (205 aa).

A Flavodoxin-like domain is found at 3-194; that stretch reads VLVVYYSMYG…AAARYQGKHV (192 aa). Residues 9 to 14 and 82 to 84 each bind FMN; these read SMYGHI and TRF. Tyr11 lines the NAD(+) pocket. Trp102 provides a ligand contact to substrate. His138 contributes to the FMN binding site.

It belongs to the WrbA family. The cofactor is FMN.

It catalyses the reaction a quinone + NADH + H(+) = a quinol + NAD(+). The enzyme catalyses a quinone + NADPH + H(+) = a quinol + NADP(+). This Geotalea daltonii (strain DSM 22248 / JCM 15807 / FRC-32) (Geobacter daltonii) protein is NAD(P)H dehydrogenase (quinone).